Reading from the N-terminus, the 203-residue chain is MADEADMRNELTDMQARADQLGDESLESTRRMLQLVEESKDAGIRTLVMLDEQGEQLERIEEGMDQINKDMKEAEKNLTDLGNLCGLCPCPCNKLKGGGQSWGNNQDGVVSSQPARVVDEREQMAISGGFIRRVTNDARENEMDENLEQVGSIIGNLRHMALDMGNEIDTQNRQIDRIMDMADSNKTRIDEANQRATKMLGSG.

Residues 1–11 (MADEADMRNEL) show a composition bias toward basic and acidic residues. Residues 1-25 (MADEADMRNELTDMQARADQLGDES) form a disordered region. T-SNARE coiled-coil homology domains are found at residues 19 to 81 (DQLG…LTDL) and 137 to 199 (DARE…ATKM).

Belongs to the SNAP-25 family.

The protein resides in the synapse. The protein localises to the synaptosome. It localises to the cell membrane. May play an important role in the synaptic function of specific neuronal systems. Associates with proteins involved in vesicle docking and membrane fusion. This Carassius auratus (Goldfish) protein is Synaptosomal-associated protein 25-B (snap25b).